The sequence spans 370 residues: Queuine tRNA-ribosyltransferase (370 aa).

Asp89 functions as the Proton acceptor in the catalytic mechanism. Substrate is bound by residues 89-93, Asp143, Gln187, and Gly214; that span reads DSGGF. The interval 245–251 is RNA binding; that stretch reads GVGTPED. The active-site Nucleophile is the Asp264. Positions 269–273 are RNA binding; important for wobble base 34 recognition; that stretch reads TRNAR. Residues Cys302, Cys304, Cys307, and His333 each coordinate Zn(2+).

Belongs to the queuine tRNA-ribosyltransferase family. Homodimer. Within each dimer, one monomer is responsible for RNA recognition and catalysis, while the other monomer binds to the replacement base PreQ1. Zn(2+) serves as cofactor.

It carries out the reaction 7-aminomethyl-7-carbaguanine + guanosine(34) in tRNA = 7-aminomethyl-7-carbaguanosine(34) in tRNA + guanine. Its pathway is tRNA modification; tRNA-queuosine biosynthesis. Its function is as follows. Catalyzes the base-exchange of a guanine (G) residue with the queuine precursor 7-aminomethyl-7-deazaguanine (PreQ1) at position 34 (anticodon wobble position) in tRNAs with GU(N) anticodons (tRNA-Asp, -Asn, -His and -Tyr). Catalysis occurs through a double-displacement mechanism. The nucleophile active site attacks the C1' of nucleotide 34 to detach the guanine base from the RNA, forming a covalent enzyme-RNA intermediate. The proton acceptor active site deprotonates the incoming PreQ1, allowing a nucleophilic attack on the C1' of the ribose to form the product. After dissociation, two additional enzymatic reactions on the tRNA convert PreQ1 to queuine (Q), resulting in the hypermodified nucleoside queuosine (7-(((4,5-cis-dihydroxy-2-cyclopenten-1-yl)amino)methyl)-7-deazaguanosine). This is Queuine tRNA-ribosyltransferase from Aromatoleum aromaticum (strain DSM 19018 / LMG 30748 / EbN1) (Azoarcus sp. (strain EbN1)).